The following is a 671-amino-acid chain: Pescadillo homolog (671 aa).

The BRCT domain maps to lysine 317–isoleucine 403. Residues glutamine 548–methionine 584 are a coiled coil. 2 disordered regions span residues lysine 552–glutamate 578 and arginine 643–glutamine 671.

The protein belongs to the pescadillo family.

The protein resides in the nucleus. It localises to the nucleolus. It is found in the nucleoplasm. Its function is as follows. Required for maturation of ribosomal RNAs and formation of the large ribosomal subunit. The polypeptide is Pescadillo homolog (Leishmania infantum).